The following is a 219-amino-acid chain: Phosphoribosylformylglycinamidine synthase subunit PurQ (219 aa).

Residues 2 to 219 (KIAVITFPGS…KVVLDLILGS (218 aa)) enclose the Glutamine amidotransferase type-1 domain. C86 (nucleophile) is an active-site residue. Active-site residues include H195 and E197.

In terms of assembly, part of the FGAM synthase complex composed of 1 PurL, 1 PurQ and 2 PurS subunits.

The protein localises to the cytoplasm. The enzyme catalyses N(2)-formyl-N(1)-(5-phospho-beta-D-ribosyl)glycinamide + L-glutamine + ATP + H2O = 2-formamido-N(1)-(5-O-phospho-beta-D-ribosyl)acetamidine + L-glutamate + ADP + phosphate + H(+). It catalyses the reaction L-glutamine + H2O = L-glutamate + NH4(+). Its pathway is purine metabolism; IMP biosynthesis via de novo pathway; 5-amino-1-(5-phospho-D-ribosyl)imidazole from N(2)-formyl-N(1)-(5-phospho-D-ribosyl)glycinamide: step 1/2. Its function is as follows. Part of the phosphoribosylformylglycinamidine synthase complex involved in the purines biosynthetic pathway. Catalyzes the ATP-dependent conversion of formylglycinamide ribonucleotide (FGAR) and glutamine to yield formylglycinamidine ribonucleotide (FGAM) and glutamate. The FGAM synthase complex is composed of three subunits. PurQ produces an ammonia molecule by converting glutamine to glutamate. PurL transfers the ammonia molecule to FGAR to form FGAM in an ATP-dependent manner. PurS interacts with PurQ and PurL and is thought to assist in the transfer of the ammonia molecule from PurQ to PurL. This is Phosphoribosylformylglycinamidine synthase subunit PurQ from Leptospira interrogans serogroup Icterohaemorrhagiae serovar copenhageni (strain Fiocruz L1-130).